The sequence spans 178 residues: Ribulose bisphosphate carboxylase small subunit, chloroplastic (178 aa).

A chloroplast-targeting transit peptide spans 1–54; that stretch reads MASISSSVATVSRTAPAQANMVAPFTGLKSNAAFPTTKKANDFSTLPSNGGRVQ.

Belongs to the RuBisCO small chain family. Heterohexadecamer of 8 large and 8 small subunits.

It is found in the plastid. It localises to the chloroplast. Functionally, ruBisCO catalyzes two reactions: the carboxylation of D-ribulose 1,5-bisphosphate, the primary event in carbon dioxide fixation, as well as the oxidative fragmentation of the pentose substrate. Both reactions occur simultaneously and in competition at the same active site. Although the small subunit is not catalytic it is essential for maximal activity. This chain is Ribulose bisphosphate carboxylase small subunit, chloroplastic, found in Helianthus annuus (Common sunflower).